A 759-amino-acid polypeptide reads, in one-letter code: uncharacterized protein (759 aa).

Disordered stretches follow at residues 269 to 328 (SQRV…GEEP) and 406 to 759 (LPLR…AQTA). Residues 289-299 (AGGKEEAERGG) show a composition bias toward basic and acidic residues. A compositionally biased stretch (low complexity) spans 406–415 (LPLRPPSGSG). Positions 417–430 (AARKPGYEKEEGRG) are enriched in basic and acidic residues. A compositionally biased stretch (low complexity) spans 431–444 (RATTASATAATSPR). Basic and acidic residues-rich tracts occupy residues 469 to 518 (PESE…RGEH) and 525 to 545 (DSGR…EKGT). Positions 585 to 599 (WVPPPHLLFPSPLPS) are enriched in pro residues. Low complexity predominate over residues 659–680 (SLSSLSSSSSSSSSSSPSYSPS). Pro residues predominate over residues 681 to 690 (PLSPPSPVSP). Composition is skewed to low complexity over residues 691 to 704 (SSPR…IRSP) and 728 to 746 (PPFS…PSAP).

This is an uncharacterized protein from Human herpesvirus 6B (strain Z29) (HHV-6 variant B).